We begin with the raw amino-acid sequence, 586 residues long: ATPase family AAA domain-containing protein 3A (586 aa).

Disordered regions lie at residues 1–55 (MSWL…PTGL) and 111–134 (QAEE…QYQD). N-acetylserine is present on serine 2. The tract at residues 2-50 (SWLFGINKGPKGEGAGPPPPLPPAQPGAEGGGDRGLGDRPAPKDKWSNF) is required for interaction with the inner surface of the mitochondrial outer membrane. Residues 2–246 (SWLFGINKGP…FRAFVTDWDK (245 aa)) are Mitochondrial intermembrane-facing. The segment covering 17–26 (GPPPPLPPAQ) has biased composition (pro residues). Basic and acidic residues-rich tracts occupy residues 32-48 (GGDR…DKWS) and 111-125 (QAEE…ETRQ). Positions 86 to 219 (QLEQQSKLKE…QIRLKAAEHR (134 aa)) form a coiled coil. A helical membrane pass occupies residues 247-264 (VTATVAGLTLLAVGVYSA). Topologically, residues 265-586 (KNATLVAGRF…PGRGDEPSPS (322 aa)) are mitochondrial matrix. The tract at residues 290–305 (RITVLEALRHPIQVSR) is S100B-binding. Serine 321 is modified (phosphoserine). 352-359 (GPPGTGKT) provides a ligand contact to ATP. Lysine 491 is modified (N6-acetyllysine).

The protein belongs to the AAA ATPase family. In terms of assembly, can form homooligomers. Homodimer formation at the N-terminus may be regulated by ATP and is required for the interaction with the inner surface of the mitochondrial outer membrane and correct mitochondrial homeostasis. Interacts with components of the mitochondrial ribosome and with other proteins involved in mitochondrial RNA metabolism. May also interact with protein involved in lipid metabolism, including STARD9. May interact with FAM210A. Interacts with GADD45GIP1. Interacts with S100B in a Ca(+2)- and Zn(+2)-dependent manner; this interaction probably occurs in the cytosol prior to mitochondrial targeting. S100B could assist ATAD3A cytoplasmic processing, preventing aggregation and favoring mitochondrial localization. Interacts with HSP60/HSPD1. Forms heterooligomers with ATAD3B; this interaction may affect ATAD3A activity. Interacts with CLPB. Interacts with EIF2AK3/PERK; ATAD3A and EIF2S1/eIF-2-alpha occupy a common binding site within the cytoplasmic loop of EIF2AK3/PERK, leading to prevent EIF2AK3/PERK association with its substrate EIF2S1/eIF-2-alpha. Overexpressed in lung adenocarcinomas (at protein level).

It localises to the mitochondrion inner membrane. It is found in the mitochondrion matrix. The protein resides in the mitochondrion nucleoid. The enzyme catalyses ATP + H2O = ADP + phosphate + H(+). Functionally, essential for mitochondrial network organization, mitochondrial metabolism and cell growth at organism and cellular level. May play an important role in mitochondrial protein synthesis. May also participate in mitochondrial DNA replication. May bind to mitochondrial DNA D-loops and contribute to nucleoid stability. Required for enhanced channeling of cholesterol for hormone-dependent steroidogenesis. Involved in mitochondrial-mediated antiviral innate immunity. Required to protect mitochondria from the PERK-mediated unfolded protein response: specifically inhibits the activity of EIF2AK3/PERK at mitochondria-endoplasmic reticulum contact sites, thereby providing a safe haven for mitochondrial protein translation during endoplasmic reticulum stress. Ability to inhibit EIF2AK3/PERK is independent of its ATPase activity. Also involved in the mitochondrial DNA damage response by promoting signaling between damaged genomes and the mitochondrial membrane, leading to activation of the integrated stress response (ISR). The sequence is that of ATPase family AAA domain-containing protein 3A from Homo sapiens (Human).